Reading from the N-terminus, the 689-residue chain is Glycine--tRNA ligase beta subunit (689 aa).

Belongs to the class-II aminoacyl-tRNA synthetase family. As to quaternary structure, tetramer of two alpha and two beta subunits.

The protein resides in the cytoplasm. The enzyme catalyses tRNA(Gly) + glycine + ATP = glycyl-tRNA(Gly) + AMP + diphosphate. The polypeptide is Glycine--tRNA ligase beta subunit (Photobacterium profundum (strain SS9)).